The primary structure comprises 268 residues: Tryptophan synthase alpha chain (268 aa).

Residues Glu49 and Asp60 each act as proton acceptor in the active site.

It belongs to the TrpA family. In terms of assembly, tetramer of two alpha and two beta chains.

It catalyses the reaction (1S,2R)-1-C-(indol-3-yl)glycerol 3-phosphate + L-serine = D-glyceraldehyde 3-phosphate + L-tryptophan + H2O. It functions in the pathway amino-acid biosynthesis; L-tryptophan biosynthesis; L-tryptophan from chorismate: step 5/5. The alpha subunit is responsible for the aldol cleavage of indoleglycerol phosphate to indole and glyceraldehyde 3-phosphate. The protein is Tryptophan synthase alpha chain of Salmonella choleraesuis (strain SC-B67).